Here is a 319-residue protein sequence, read N- to C-terminus: uncharacterized protein (319 aa).

An N-terminal signal peptide occupies residues methionine 1–alanine 23.

The protein to H.influenzae HI_0755.

This is an uncharacterized protein from Escherichia coli (strain K12).